The sequence spans 149 residues: Calmodulin (149 aa).

Position 2 is an N-acetylalanine (Ala2). EF-hand domains follow at residues 8-43 (DQIS…LGQN), 44-79 (PTEA…KMKD), 81-116 (DSEE…LGEK), and 117-149 (LTDE…MMAK). Asp21, Asp23, Asp25, Cys27, Glu32, Asp57, Asp59, Asn61, Thr63, Glu68, Asp94, Asp96, Asn98, and Glu105 together coordinate Ca(2+). Lys116 bears the N6,N6,N6-trimethyllysine mark. Positions 130, 132, 134, 136, and 141 each coordinate Ca(2+).

This sequence belongs to the calmodulin family.

In terms of biological role, calmodulin mediates the control of a large number of enzymes, ion channels and other proteins by Ca(2+). Among the enzymes to be stimulated by the calmodulin-Ca(2+) complex are a number of protein kinases and phosphatases. The chain is Calmodulin (CCM1) from Capsicum annuum (Capsicum pepper).